The chain runs to 793 residues: MIETLESTQVSHETLRTIDAYWRAANYLSVGQIYLSDNPLLKRPLRIEDVKKMLLGHWGTTPGQNFIYAHLNRTIKQNDLNMIYVSGPGHGGPAVVANTYLEGSYSEIYPHISQDEAGMRKLFVQFSFPGGIPSHASPECPGSIHEGGELGYSLSHSFGAVFDNPDLIVACVVGDGEAETGPLATAWHSNKFLNPATDGAVLPILHLNGFKIANPTILARINHEELEQLMRGYGWTPIFVEGKDPMKMHAAMAEALDVAIGQIRSIQQNARETGDTSRPRWPMIVLRSPKGWTGPKFVDGVRNEGTFHSHQVPLSDPAKCPEHLKQIEQWLRSYRPEELLDENGRLRQEIADLAPTGDRRMGANPHANGGRLLRRLKMPDFRDYAVEISQRGCRGIGDTHVTGKFIRDIVRLNEEHKNFRIFGPDETISNGLEAVFDVTQRQWNAAIVEDDESLAPTGRVLEMLSEHQCEGWLEGYLLTGRHGLFNCYEAFVHIVDSMFNQHAKWLKVTSELPWRHKIASLNYLLASHVWRQDHNGFTHQDPGFLDVVVNKKAEIVRVYLPPDANCLLSVMDHCLRSQHYVNVVVAGKHPSPQWLTMGEAAEHCAKGIGIWDWAGNESSSDPDVVMACCGDVPTLETLAAVSILREHLPDLTIRVVNVVDLMRLQPKSEHPHGLSDSDFDALFTKNKHVIFAFHAYPWLVHRLTYRRTNHANIHVRGYKEEGTITTPFDMTVLNDLDRFHLVMDAIDRLPETGGRGQRLKALMQEKLVEHRRYINENGQDMPEIRDWEWSARS.

This sequence belongs to the XFP family. Requires thiamine diphosphate as cofactor.

In Rhodopirellula baltica (strain DSM 10527 / NCIMB 13988 / SH1), this protein is Probable phosphoketolase.